The chain runs to 246 residues: tRNA pseudouridine synthase A (246 aa).

The active-site Nucleophile is the Asp-52. Tyr-111 lines the substrate pocket.

Belongs to the tRNA pseudouridine synthase TruA family. As to quaternary structure, homodimer.

It catalyses the reaction uridine(38/39/40) in tRNA = pseudouridine(38/39/40) in tRNA. Functionally, formation of pseudouridine at positions 38, 39 and 40 in the anticodon stem and loop of transfer RNAs. The protein is tRNA pseudouridine synthase A of Borreliella burgdorferi (strain ZS7) (Borrelia burgdorferi).